The chain runs to 200 residues: High frequency lysogenization protein HflD homolog (200 aa).

This sequence belongs to the HflD family.

It localises to the cytoplasm. Its subcellular location is the cell inner membrane. This is High frequency lysogenization protein HflD homolog from Pseudoalteromonas translucida (strain TAC 125).